Consider the following 252-residue polypeptide: Protein AGAMOUS-LIKE 6 (252 aa).

The MADS-box domain maps to 1 to 61 (MGRGRVELKR…GKLYEFGSAG (61 aa)). 2 short sequence motifs (nuclear localization signal) span residues 8–15 (LKRIENKI) and 138–145 (QRKTQIMM). Residues 85–175 (TQSWYQEVSK…KIKVSLELSS (91 aa)) enclose the K-box domain.

As to expression, restricted to flowers.

It is found in the nucleus. In terms of biological role, probable transcription factor involved in fruit development. Key regulator of the transition between the state of 'ovary arrest' imposed towards anthesis and the fertilization-triggered fruit set. This is Protein AGAMOUS-LIKE 6 from Solanum lycopersicum (Tomato).